The sequence spans 956 residues: Calsyntenin-3 (956 aa).

The first 19 residues, 1–19 (MTLLLVSLLLASLLQISSG), serve as a signal peptide directing secretion. The Cytoplasmic portion of the chain corresponds to 1–21 (MTLLLVSLLLASLLQISSGNK). Topologically, residues 20–847 (NKANKHKPWI…SHRNSMVPSA (828 aa)) are extracellular. The helical intramembrane region spans 22–42 (ANKHKPWIEAEYQGIVMENDN). 2 consecutive Cadherin domains span residues 29–145 (IEAE…APVF) and 146–246 (VERL…KPSW). At 43-73 (TVLLNPPLFALDKDAPLRYAGEICGFRLHGS) the chain is on the cytoplasmic side. An intramembrane region (helical) is located at residues 74–94 (GVPFEAVILDKATGEGLIRAK). The Cytoplasmic segment spans residues 95-139 (EPVDCEAQKEHTFTIQAYDCGEGPDGTNTKKSHKATVHVRVNDVN). An intramembrane region (helical) is located at residues 140-160 (EFAPVFVERLYRAAVTEGKLY). At 161 to 248 (DRILRVEAID…KPTCKPSWQG (88 aa)) the chain is on the cytoplasmic side. Residues 249-269 (WNKRIEYAPGAGSLALFPGIR) form a helical membrane-spanning segment. Residues 270–357 (LETCDEPLWN…GTQAVQVPLG (88 aa)) are Lumenal-facing. Asn-299, Asn-327, Asn-347, Asn-507, and Asn-740 each carry an N-linked (GlcNAc...) asparagine glycan. A helical transmembrane segment spans residues 848 to 868 (ATLIIVVCVGFLVLMVILGLV). Over 869–956 (RIHSLHRRVS…RIIESPPHRY (88 aa)) the chain is Cytoplasmic. The segment at 916–956 (QTCVAGVAGGQQEEEDSSDSEAADSPSSDERRIIESPPHRY) is disordered. Positions 927–937 (QEEEDSSDSEA) are enriched in acidic residues. Over residues 943–956 (SDERRIIESPPHRY) the composition is skewed to basic and acidic residues.

This sequence belongs to the calsyntenin family. Interacts (via cadherin domains) with both alpha and beta isoforms of neurexins (NRXN1, NRXN2 and NRXN3). Directly interacts with APBA2. Forms a tripartite complex with APBA2 and APP. Interacts with low affinity with KLC1. Interacts with SLC23A2/SVCT2. As to quaternary structure, interacts with CIDEA; inhibiting the lipid transferase activity of CIDEA. Interacts with CIDEC; inhibiting the lipid transferase activity of CIDEC. Proteolytically processed under normal cellular conditions. A primary zeta-cleavage generates a large extracellular (soluble) N-terminal domain (sAlc) and a short C-terminal transmembrane fragment (CTF1). A secondary cleavage catalyzed by gamma-secretase within the transmembrane domain releases the beta-Alc-beta chain in the extracellular milieu and produces an intracellular fragment (AlcICD). This processing is strongly suppressed in the tripartite complex formed with APBA2 and APP, which seems to prevent the association with gamma-secretase. Post-translationally, ubiquitinated: endoplasmic reticulum-localized protein is ubiquitinated and degraded by the endoplasmic reticulum-associated degradation (ERAD) pathway. In terms of tissue distribution, restricted to the brain (at protein level). In the cerebral cortex, found in the somas and neuropil of all layers. Expressed at highest levels in neurons of cortical layer 5 and, at lower levels, in neurons of the upper layers. Highly expressed in Purkinje cells. Also found in a few scattered interneurons throughout the granule cell layer and occasionally in neurons in the molecular layer (at protein level). In all layers, high levels in a subpopulation of presumptive GABAergic neurons (based on morphology). As to expression, expression is restricted to adipose tissue, with high expression in thermogenic adipocytes (brown adipose tissue).

The protein localises to the postsynaptic cell membrane. It is found in the endoplasmic reticulum membrane. The protein resides in the golgi apparatus membrane. It localises to the cell projection. Its subcellular location is the dendrite. The protein localises to the lipid droplet. In terms of biological role, postsynaptic adhesion molecule that binds to presynaptic neurexins to mediate both excitatory and inhibitory synapse formation. Promotes synapse development by acting as a cell adhesion molecule at the postsynaptic membrane, which associates with both neurexin-alpha and neurexin-beta proteins at the presynaptic membrane. Regulates the balance between excitatory and inhibitory synapses by inhibiting formation of excitatory parallel-fiber synapses and promoting formation of inhibitory synapses in the same neuron. May also be involved in ascorbate (vitamin C) uptake via its interaction with SLC23A2/SVCT2. Complex formation with APBA2 and APP, stabilizes APP metabolism and enhances APBA2-mediated suppression of beta-APP40 secretion, due to the retardation of intracellular APP maturation. Adipose-specific isoform that plays a key role in adaptive thermogenesis. Facilitates the efficient use of stored triglyceride by promoting multilocular morphology of thermogenic adipocytes: acts by inhibiting the activity of CIDEA and CIDEC on lipid droplets, thereby preventing lipid droplet fusion and facilitating lipid utilization. May also participate in adaptive thermogenesis by promoting sympathetic innervation of thermogenic adipose tissue: acts by driving secretion of neurotrophic factor S100B from brown adipocytes, stimulating neurite outgrowth from sympathetic neurons. The sequence is that of Calsyntenin-3 from Mus musculus (Mouse).